We begin with the raw amino-acid sequence, 668 residues long: Echinocandin B biosynthetic cluster protein J (668 aa).

Disordered stretches follow at residues 1-20, 92-113, 224-322, 330-349, and 483-506; these read MHFA…DQSL, YTPP…PPTP, PLDH…QSAD, EVAE…SIPT, and NCSS…PPLK. Residues 96–106 are compositionally biased toward polar residues; it reads SLDSRSSATPP. Positions 264-275 are enriched in pro residues; the sequence is NPEPGTPTPPSP. Residues 311–322 are compositionally biased toward polar residues; it reads YRSTPSPCQSAD. Residues 484-494 show a composition bias toward low complexity; the sequence is CSSSSCSSSAS. The segment covering 495–505 has biased composition (basic and acidic residues); the sequence is KKNEEKREPPL.

Its pathway is antifungal biosynthesis. Part of the gene cluster that mediates the biosynthesis of echinocandin B, a fungal lipidated cyclic hexapeptide that acts as an antifungal agent. Linoleoyl-AMP, produced by the fatty-acyl-AMP ligase ecdI, is transferred to the initiation carrier domain (T0) of ecdA. The linoleoyl-S-phosphopantetheinyl-T0 is sequentially extended with L-ornithine, L-threonine, L-proline, L-homotyrosine, L-threonine, and 4R-methyl-L-proline to form the linear hexapeptide. Thereafter, the terminal condensation (C7) performs macrocyclization of the NRPS product and the cyclic scaffold is released from ecdA. All six of the amino acid residues are hydroxylated, including 4R,5R-dihydroxy-L-ornithine, 4R-hydroxyl-L-proline, 3S,4S-dihydroxy-L-homotyrosine, and 3S-hydroxyl-4S-methyl-L-prolin. In the pathway, all the hydroxylation reactions are proposed to occur following completion of the cyclic peptide, so the unhydroxylated precursor produced by ecdA will undergo six rounds of hydroxylation. Five hydroxylase genes (ecdG, ecdH, ecdK, htyE and htyF) are embedded within the echinocandin B (ecd) and L-homotyrosine (hty) clusters. In Aspergillus rugulosus (Emericella rugulosa), this protein is Echinocandin B biosynthetic cluster protein J.